The chain runs to 417 residues: UDP-N-acetylglucosamine 1-carboxyvinyltransferase (417 aa).

A phosphoenolpyruvate-binding site is contributed by 22-23 (KN). Arginine 92 provides a ligand contact to UDP-N-acetyl-alpha-D-glucosamine. Residue cysteine 116 is the Proton donor of the active site. Cysteine 116 carries the 2-(S-cysteinyl)pyruvic acid O-phosphothioketal modification. UDP-N-acetyl-alpha-D-glucosamine contacts are provided by residues 121–125 (RPIDL), aspartate 306, and isoleucine 328.

This sequence belongs to the EPSP synthase family. MurA subfamily.

Its subcellular location is the cytoplasm. It carries out the reaction phosphoenolpyruvate + UDP-N-acetyl-alpha-D-glucosamine = UDP-N-acetyl-3-O-(1-carboxyvinyl)-alpha-D-glucosamine + phosphate. Its pathway is cell wall biogenesis; peptidoglycan biosynthesis. Its function is as follows. Cell wall formation. Adds enolpyruvyl to UDP-N-acetylglucosamine. The polypeptide is UDP-N-acetylglucosamine 1-carboxyvinyltransferase (Buchnera aphidicola subsp. Schizaphis graminum (strain Sg)).